The primary structure comprises 160 residues: Transcriptional repressor NrdR (160 aa).

Residues 3 to 34 (CPACNYNGTKVLDSRPVQDFGSIRRRRECESC) fold into a zinc finger. Residues 49–139 (LIIVKKDGTR…VYKQFKDINV (91 aa)) form the ATP-cone domain.

Belongs to the NrdR family. Requires Zn(2+) as cofactor.

Functionally, negatively regulates transcription of bacterial ribonucleotide reductase nrd genes and operons by binding to NrdR-boxes. This Exiguobacterium sibiricum (strain DSM 17290 / CCUG 55495 / CIP 109462 / JCM 13490 / 255-15) protein is Transcriptional repressor NrdR.